Consider the following 857-residue polypeptide: KH domain-containing protein HEN4 (857 aa).

The segment covering 1–15 (MERNSVKFHAEKRSG) has biased composition (basic and acidic residues). The interval 1–27 (MERNSVKFHAEKRSGAFDPGSGFGSSK) is disordered. 4 consecutive KH domains span residues 46–110 (HAAF…KLGA), 149–217 (TVVC…LVSI), 451–521 (DVVF…IMLI), and 541–610 (SITA…IFHI). Residues 644-755 (SDNPLSIGSH…RGLSDASGGL (112 aa)) are disordered. Polar residues-rich tracts occupy residues 645–665 (DNPLSIGSHQSVSNPATNSSS) and 673–688 (SFLSGSHSSVNYSRSV). Positions 718–730 (FTMDHSDNSHHLT) are enriched in basic and acidic residues. Residues 746 to 755 (RGLSDASGGL) show a composition bias toward low complexity. Residues 775 to 839 (NTTVEIRVPA…DQTQAAQNLL (65 aa)) enclose the KH 5 domain.

In terms of assembly, interacts with HUA1. Interacts with FLK and PEP.

The protein localises to the nucleus speckle. Functionally, functions in floral reproductive organ identity in the third whorl and floral determinacy specification by specifically promoting the processing of AGAMOUS (AG) pre-mRNA. Functions in association with HUA1 and HUA2. The protein is KH domain-containing protein HEN4 of Arabidopsis thaliana (Mouse-ear cress).